Reading from the N-terminus, the 176-residue chain is Ribosome maturation factor RimP (176 aa).

This sequence belongs to the RimP family.

Its subcellular location is the cytoplasm. Functionally, required for maturation of 30S ribosomal subunits. The chain is Ribosome maturation factor RimP from Mycolicibacterium vanbaalenii (strain DSM 7251 / JCM 13017 / BCRC 16820 / KCTC 9966 / NRRL B-24157 / PYR-1) (Mycobacterium vanbaalenii).